Reading from the N-terminus, the 400-residue chain is MGAPLSTTRRGMGQNLSVPNPLGFFPEHQLDPLFRANSSSPDWDFNKNKDTWPMANKVGVGGYGPGFTPPHGGLLGWSPQAQGVLTTLPADPPPASTNRRSGRKPTPVSPPLRDTHPQAMQWNSTQFHQALLDPRVRALYFPAGGSSSETQNPAPTIASLTSSIFSKTGGPAMNMDSITSGLLGPLLVLQAVCFLLTKILTIPQSLDSWWTSLNFLGGLPGCPGQNSQSPTSNHLPTSCPPTCPGYRWMCLRRFIIFLFILLLCLIFLLVLLDYQGMLPVCPLIPGSTTTSTGPCKTCTTLAQGTSMFPSCCCSKPSDGNCTCIPIPSSWALGKYLWEWASARFSWLSLLVQFVQWCVGLSPTVWLLVIWMIWYWGPNLCSILSPFIPLLPIFCYLWVSI.

Methionine 1 carries the N-acetylmethionine modification. A lipid anchor (N-myristoyl glycine; by host) is attached at glycine 2. Residues 2–119 (GAPLSTTRRG…PPLRDTHPQA (118 aa)) form a pre-S1 region. Residues 2 to 174 (GAPLSTTRRG…FSKTGGPAMN (173 aa)) form a pre-S region. Residues 2 to 181 (GAPLSTTRRG…AMNMDSITSG (180 aa)) lie on the Virion surface; in external conformation side of the membrane. The Intravirion; in internal conformation segment spans residues 2-253 (GAPLSTTRRG…PGYRWMCLRR (252 aa)). Proline 4 carries an N-linked (GlcNAc...) asparagine glycan. Positions 84–114 (VLTTLPADPPPASTNRRSGRKPTPVSPPLRD) are disordered. The pre-S2 stretch occupies residues 120 to 174 (MQWNSTQFHQALLDPRVRALYFPAGGSSSETQNPAPTIASLTSSIFSKTGGPAMN). Residues 182–202 (LLGPLLVLQAVCFLLTKILTI) traverse the membrane as a helical segment. Residues 203 to 253 (PQSLDSWWTSLNFLGGLPGCPGQNSQSPTSNHLPTSCPPTCPGYRWMCLRR) lie on the Intravirion; in external conformation side of the membrane. The chain crosses the membrane as a helical span at residues 254-274 (FIIFLFILLLCLIFLLVLLDY). At 275–348 (QGMLPVCPLI…WASARFSWLS (74 aa)) the chain is on the virion surface side. Asparagine 320 carries N-linked (GlcNAc...) asparagine; by host glycosylation. A helical transmembrane segment spans residues 349–369 (LLVQFVQWCVGLSPTVWLLVI). Topologically, residues 370–375 (WMIWYW) are intravirion. Residues 376-398 (GPNLCSILSPFIPLLPIFCYLWV) form a helical membrane-spanning segment. Topologically, residues 399–400 (SI) are virion surface.

The protein belongs to the orthohepadnavirus major surface antigen family. In its internal form (Li-HBsAg), interacts with the capsid protein and with the isoform S. Interacts with host chaperone CANX. As to quaternary structure, associates with host chaperone CANX through its pre-S2 N glycan; this association may be essential for isoform M proper secretion. In terms of assembly, interacts with isoform L. Interacts with the antigens of satellite virus HDV (HDVAgs); this interaction is required for encapsidation of HDV genomic RNA. Post-translationally, isoform M is N-terminally acetylated by host at a ratio of 90%, and N-glycosylated by host at the pre-S2 region. In terms of processing, myristoylated.

It is found in the virion membrane. The large envelope protein exists in two topological conformations, one which is termed 'external' or Le-HBsAg and the other 'internal' or Li-HBsAg. In its external conformation the protein attaches the virus to cell receptors and thereby initiating infection. This interaction determines the species specificity and liver tropism. This attachment induces virion internalization predominantly through caveolin-mediated endocytosis. The large envelope protein also assures fusion between virion membrane and endosomal membrane. In its internal conformation the protein plays a role in virion morphogenesis and mediates the contact with the nucleocapsid like a matrix protein. Its function is as follows. The middle envelope protein plays an important role in the budding of the virion. It is involved in the induction of budding in a nucleocapsid independent way. In this process the majority of envelope proteins bud to form subviral lipoprotein particles of 22 nm of diameter that do not contain a nucleocapsid. The sequence is that of Large envelope protein from Homo sapiens (Human).